Here is a 508-residue protein sequence, read N- to C-terminus: Photosystem II CP47 reaction center protein (508 aa).

Helical transmembrane passes span 21–36 (AVHI…WAGS), 101–115 (IVFS…IWHW), 140–156 (GIHL…FGAF), 203–218 (IAAG…FHLS), 237–252 (VLSS…AFVV), and 457–472 (TFAL…HGAR).

This sequence belongs to the PsbB/PsbC family. PsbB subfamily. In terms of assembly, PSII is composed of 1 copy each of membrane proteins PsbA, PsbB, PsbC, PsbD, PsbE, PsbF, PsbH, PsbI, PsbJ, PsbK, PsbL, PsbM, PsbT, PsbX, PsbY, PsbZ, Psb30/Ycf12, at least 3 peripheral proteins of the oxygen-evolving complex and a large number of cofactors. It forms dimeric complexes. Requires Binds multiple chlorophylls. PSII binds additional chlorophylls, carotenoids and specific lipids. as cofactor.

Its subcellular location is the plastid. It is found in the chloroplast thylakoid membrane. Functionally, one of the components of the core complex of photosystem II (PSII). It binds chlorophyll and helps catalyze the primary light-induced photochemical processes of PSII. PSII is a light-driven water:plastoquinone oxidoreductase, using light energy to abstract electrons from H(2)O, generating O(2) and a proton gradient subsequently used for ATP formation. This Agrostis stolonifera (Creeping bentgrass) protein is Photosystem II CP47 reaction center protein.